The following is a 631-amino-acid chain: Sphingomyelin phosphodiesterase (631 aa).

The interval 1 to 23 (MPRYGASLRQSCPRSGREQGQDG) is disordered. The signal sequence occupies residues 1–46 (MPRYGASLRQSCPRSGREQGQDGTAGAPGLLWMGLVLALALALALA). The Saposin B-type domain occupies 87–171 (GNLTCPICKG…LLGSTCGHWD (85 aa)). A glycan (N-linked (GlcNAc...) asparagine) is linked at Asn88. 3 disulfide bridges follow: Cys91/Cys167, Cys94/Cys159, and Cys122/Cys133. Residue Asn177 is glycosylated (N-linked (GlcNAc...) asparagine). Residues Asp208 and His210 each contribute to the Zn(2+) site. Intrachain disulfides connect Cys223–Cys228 and Cys229–Cys252. Residues Asp280 and Asn320 each contribute to the Zn(2+) site. N-linked (GlcNAc...) asparagine glycans are attached at residues Asn337 and Asn397. Cys387 and Cys433 are disulfide-bonded. Residues His427, His459, and His461 each contribute to the Zn(2+) site. N-linked (GlcNAc...) asparagine glycosylation occurs at Asn505. Ser510 carries the phosphoserine; by PKC/PRKCD modification. The N-linked (GlcNAc...) asparagine glycan is linked to Asn522. 2 cysteine pairs are disulfide-bonded: Cys586–Cys590 and Cys596–Cys609.

It belongs to the acid sphingomyelinase family. Monomer. Interacts with SORT1; the interaction is required for SMPD1 targeting to lysosomes. It depends on Zn(2+) as a cofactor. Post-translationally, proteolytically processed. Mature lysosomal form arises from C-terminal proteolytic processing of pro-sphingomyelin phosphodiesterase. In terms of processing, this form is generated following cleavage by CASP7 in the extracellular milieu. It shows increased activity. Both lysosomal and secreted forms are glycosylated but they show a differential pattern of glycosylation. Post-translationally, phosphorylated at Ser-510 by PRKCD upon stress stimuli. Phosphorylation is required for secretion.

The protein localises to the lysosome. The protein resides in the lipid droplet. Its subcellular location is the secreted. It localises to the extracellular space. The enzyme catalyses a sphingomyelin + H2O = phosphocholine + an N-acylsphing-4-enine + H(+). It catalyses the reaction N-(octadecanoyl)-sphing-4-enine-1-phosphocholine + H2O = N-octadecanoylsphing-4-enine + phosphocholine + H(+). It carries out the reaction 1,2-dihexadecanoyl-sn-glycero-3-phosphocholine + H2O = 1,2-dihexadecanoyl-sn-glycerol + phosphocholine + H(+). The catalysed reaction is a 1,2-diacyl-sn-glycero-3-phosphocholine + H2O = phosphocholine + a 1,2-diacyl-sn-glycerol + H(+). Hydrolysis of liposomal sphingomyelin is stimulated by incorporation of diacylglycerol (DAG), ceramide and free fatty acids into the liposomal membranes. Phosphatidylcholine hydrolysis is inhibited by incorporation of cholesterol, ceramide, DAG, monoacylglycerol and fatty acids. Antidepressants, namely amitriptyline, imipramine, desipramine, fluoxetine, sertraline, escitalopram, and maprotiline inhibit sphingomyelin phosphodiesterase activity. With respect to regulation, (Microbial infection) The secretory form is activated by P.aeruginosa, this activation results in the release of ceramide in the outer leaflet of the plasma membrane. Its activity is regulated as follows. (Microbial infection) The secretory form is activated by human coronavirus SARS-CoV-2, this activation results in the release of ceramide in the outer leaflet of the plasma membrane. In terms of biological role, converts sphingomyelin to ceramide. Exists as two enzymatic forms that arise from alternative trafficking of a single protein precursor, one that is targeted to the endolysosomal compartment, whereas the other is released extracellularly. However, in response to various forms of stress, lysosomal exocytosis may represent a major source of the secretory form. Its function is as follows. In the lysosomes, converts sphingomyelin to ceramide. Plays an important role in the export of cholesterol from the intraendolysosomal membranes. Also has phospholipase C activities toward 1,2-diacylglycerolphosphocholine and 1,2-diacylglycerolphosphoglycerol. Modulates stress-induced apoptosis through the production of ceramide. When secreted, modulates cell signaling with its ability to reorganize the plasma membrane by converting sphingomyelin to ceramide. Secreted form is increased in response to stress and inflammatory mediators such as IL1B, IFNG or TNF as well as upon infection with bacteria and viruses. Produces the release of ceramide in the outer leaflet of the plasma membrane playing a central role in host defense. Ceramide reorganizes these rafts into larger signaling platforms that are required to internalize P.aeruginosa, induce apoptosis and regulate the cytokine response in infected cells. In wounded cells, the lysosomal form is released extracellularly in the presence of Ca(2+) and promotes endocytosis and plasma membrane repair. Functionally, this form is generated following cleavage by CASP7 in the extracellular milieu in response to bacterial infection. It shows increased ability to convert sphingomyelin to ceramide and promotes plasma membrane repair. Plasma membrane repair by ceramide counteracts the action of gasdermin-D (GSDMD) perforin (PRF1) pores that are formed in response to bacterial infection. In terms of biological role, (Microbial infection) Secretion is activated by bacteria such as P.aeruginosa, N.gonorrhoeae and others, this activation results in the release of ceramide in the outer leaflet of the plasma membrane which facilitates the infection. Its function is as follows. (Microbial infection) Secretion is activated by human coronaviruses SARS-CoV and SARS-CoV-2 as well as Zaire ebolavirus, this activation results in the release of ceramide in the outer leaflet of the plasma membrane which facilitates the infection. Lacks residues that bind the cofactor Zn(2+) and has no enzyme activity. In Homo sapiens (Human), this protein is Sphingomyelin phosphodiesterase.